Here is a 431-residue protein sequence, read N- to C-terminus: Adenylosuccinate synthetase (431 aa).

GTP contacts are provided by residues 12 to 18 (GDEGKGK) and 40 to 42 (GHT). Residue aspartate 13 is the Proton acceptor of the active site. Mg(2+) is bound by residues aspartate 13 and glycine 40. IMP contacts are provided by residues 13–16 (DEGK), 38–41 (NAGH), threonine 131, arginine 145, glutamine 225, threonine 240, and arginine 304. Histidine 41 acts as the Proton donor in catalysis. 300–306 (VNTGRRR) is a substrate binding site. Residues arginine 306, 332–334 (KLD), and 414–416 (STS) contribute to the GTP site.

This sequence belongs to the adenylosuccinate synthetase family. As to quaternary structure, homodimer. It depends on Mg(2+) as a cofactor.

It localises to the cytoplasm. The catalysed reaction is IMP + L-aspartate + GTP = N(6)-(1,2-dicarboxyethyl)-AMP + GDP + phosphate + 2 H(+). Its pathway is purine metabolism; AMP biosynthesis via de novo pathway; AMP from IMP: step 1/2. Functionally, plays an important role in the de novo pathway of purine nucleotide biosynthesis. Catalyzes the first committed step in the biosynthesis of AMP from IMP. The sequence is that of Adenylosuccinate synthetase from Beijerinckia indica subsp. indica (strain ATCC 9039 / DSM 1715 / NCIMB 8712).